The sequence spans 570 residues: MPYKISRAAYAGMFGPTTGDKVRLADTELFIEIEKDFTTYGEEVKFGGGKVIRDGMGQSQVTRADGAVDTVITNAVIVDHSGVYKADIGLKDGRIVAIGKAGNPDMQPGVNIIVGPGTEAIAAEGKIVTAGGMDSHIHFIAPQQIEEALMSGMTCMLGGGTGPAHGTLATTCTPGPWHLARMIEAADAFPMNLAFAGKGNASLPGALTEMVLAGATSLKLHEDWGTTPGAIDCCLSVADEYDVQVMIHTDTLNESGFVEDTIGAIKGRTIHAFHTEGAGGGHAPDIIKICGQPNVIPSSTNPTRPYTVNTIAEHLDMLMVCHHLSPSIPEDIAFAESRIRKETIAAEDILHDIGAFSIISSDSQAMGRVGEVAIRTWQTADKMKRQRGRLKQENGDNDNFRVRRYIAKYTINPAIAHGLSHEIGSVEVGKRADLVLWNPAFFGVKPDMVLLGGSIAAAPMGDPNASIPTPQPVHYRPMFASYGRSLTNSSVTFVSQASLDAGLKGRLGVAKQLVAVKNTRGGISKASMIHNDLTPEIEVDPETYEVRANGELLTCEPATVLPMAQRYFLF.

One can recognise a Urease domain in the interval 131 to 570 (GGMDSHIHFI…LPMAQRYFLF (440 aa)). Ni(2+)-binding residues include His-136, His-138, and Lys-219. At Lys-219 the chain carries N6-carboxylysine. Position 221 (His-221) interacts with substrate. His-248 and His-274 together coordinate Ni(2+). His-322 (proton donor) is an active-site residue. Asp-362 is a Ni(2+) binding site.

Belongs to the metallo-dependent hydrolases superfamily. Urease alpha subunit family. Heterotrimer of UreA (gamma), UreB (beta) and UreC (alpha) subunits. Three heterotrimers associate to form the active enzyme. It depends on Ni cation as a cofactor. Post-translationally, carboxylation allows a single lysine to coordinate two nickel ions.

Its subcellular location is the cytoplasm. The catalysed reaction is urea + 2 H2O + H(+) = hydrogencarbonate + 2 NH4(+). The protein operates within nitrogen metabolism; urea degradation; CO(2) and NH(3) from urea (urease route): step 1/1. This chain is Urease subunit alpha, found in Rhizobium leguminosarum bv. trifolii (strain WSM2304).